Reading from the N-terminus, the 238-residue chain is Sugar fermentation stimulation protein homolog (238 aa).

The protein belongs to the SfsA family.

The protein is Sugar fermentation stimulation protein homolog of Vibrio vulnificus (strain YJ016).